The primary structure comprises 431 residues: 3-phosphoshikimate 1-carboxyvinyltransferase (431 aa).

3-phosphoshikimate contacts are provided by K21, S22, and R26. K21 serves as a coordination point for phosphoenolpyruvate. Phosphoenolpyruvate is bound by residues G93 and R122. S167, Q169, D318, and K345 together coordinate 3-phosphoshikimate. Q169 is a binding site for phosphoenolpyruvate. The Proton acceptor role is filled by D318. R349 and R391 together coordinate phosphoenolpyruvate.

This sequence belongs to the EPSP synthase family. In terms of assembly, monomer.

It is found in the cytoplasm. The enzyme catalyses 3-phosphoshikimate + phosphoenolpyruvate = 5-O-(1-carboxyvinyl)-3-phosphoshikimate + phosphate. Its pathway is metabolic intermediate biosynthesis; chorismate biosynthesis; chorismate from D-erythrose 4-phosphate and phosphoenolpyruvate: step 6/7. Its function is as follows. Catalyzes the transfer of the enolpyruvyl moiety of phosphoenolpyruvate (PEP) to the 5-hydroxyl of shikimate-3-phosphate (S3P) to produce enolpyruvyl shikimate-3-phosphate and inorganic phosphate. The chain is 3-phosphoshikimate 1-carboxyvinyltransferase from Roseiflexus castenholzii (strain DSM 13941 / HLO8).